The following is a 126-amino-acid chain: Fatty acid-binding protein, liver (126 aa).

Residue A2 is modified to N-acetylalanine.

This sequence belongs to the calycin superfamily. Fatty-acid binding protein (FABP) family.

It localises to the cytoplasm. Functionally, binds free fatty acids and their coenzyme A derivatives, bilirubin, and some other small molecules in the cytoplasm. May be involved in intracellular lipid transport. This Schroederichthys bivius (Narrowmouthed catshark) protein is Fatty acid-binding protein, liver (fabp1).